A 250-amino-acid chain; its full sequence is Probable aquaporin TIP-type (250 aa).

Helical transmembrane passes span 22-42 and 56-76; these read AGLA…GSGI and AGLI…VSVG. An NPA 1 motif is present at residues 85-87; it reads NPA. Helical transmembrane passes span 104–124, 138–158, and 170–190; these read IVYI…LVFV, VGVG…VYTV, and IGII…LVGG. Residues 198 to 200 carry the NPA 2 motif; that stretch reads NPA. A helical transmembrane segment spans residues 218 to 238; sequence YWAGPLIGGGIAGLVYEVLFI.

It belongs to the MIP/aquaporin (TC 1.A.8) family. TIP (TC 1.A.8.10) subfamily.

The protein localises to the membrane. In terms of biological role, aquaporins facilitate the transport of water and small neutral solutes across cell membranes. May have a role in buffering osmotic fluctations in the highly compartmented vacuole of arbuscule cells. The sequence is that of Probable aquaporin TIP-type (AQP1) from Medicago truncatula (Barrel medic).